We begin with the raw amino-acid sequence, 124 residues long: MEYEFRRNSLTGTYLASFSMDHEVLGQWFSEELGPELAKIQQVLDIIKDIQAGKRDSWRLIGGDLTLDLDEEQARIYANALGFEQEYELEESMSLYDAESEAYCGLEDLEEALLSWYKFVEKGR.

This sequence belongs to the UPF0231 family.

This Shewanella sp. (strain MR-7) protein is UPF0231 protein Shewmr7_3366.